The primary structure comprises 548 residues: Rhodopsin kinase grk7-b (548 aa).

The residue at position 33 (S33) is a Phosphoserine; by PKA. Residues 53-172 (FEDICEQQPI…QTSLFFDRFV (120 aa)) enclose the RGS domain. The region spanning 187–446 (FYEFRTLGKG…NDDPRKHEFF (260 aa)) is the Protein kinase domain. ATP-binding positions include 193–201 (LGKGGFGEV) and K216. D312 (proton acceptor) is an active-site residue. Positions 447-512 (KSINFPRLEA…GVVPIAWQQE (66 aa)) constitute an AGC-kinase C-terminal domain. Residues 520-548 (DELSDPNRKESAAGLEDEEQQKSKSCTLL) form a disordered region. C545 is modified (cysteine methyl ester). The S-geranylgeranyl cysteine moiety is linked to residue C545. The propeptide at 546–548 (TLL) is removed in mature form.

Belongs to the protein kinase superfamily. AGC Ser/Thr protein kinase family. GPRK subfamily. Post-translationally, phosphorylation at Ser-33 is regulated by light and activated by cAMP. Expressed in the eyes (at protein level). Expressed in the eyes, the pineal gland and in the brain.

It is found in the membrane. The catalysed reaction is L-threonyl-[rhodopsin] + ATP = O-phospho-L-threonyl-[rhodopsin] + ADP + H(+). It carries out the reaction L-seryl-[rhodopsin] + ATP = O-phospho-L-seryl-[rhodopsin] + ADP + H(+). In terms of biological role, retina-specific kinase involved in the shutoff of the photoresponse and adaptation to changing light conditions via cone opsin phosphorylation, including rhodopsin (RHO). The polypeptide is Rhodopsin kinase grk7-b (grk7b) (Danio rerio (Zebrafish)).